The primary structure comprises 517 residues: Salicyloyl-CoA 5-hydroxylase (517 aa).

This sequence belongs to the aromatic-ring hydroxylase family. KMO subfamily.

The enzyme catalyses 2-hydroxybenzoyl-CoA + NADH + O2 + H(+) = 2,5-dihydroxybenzoyl-CoA + NAD(+) + H2O. Functionally, involved in the degradation of salicylate via a pathway involving coenzyme A derivative. Catalyzes the aromatic hydroxylation of salicylyl-CoA to yield gentisyl-CoA. This Streptomyces sp protein is Salicyloyl-CoA 5-hydroxylase.